The primary structure comprises 238 residues: Response regulator receiver protein Anae109_2439 (238 aa).

Response regulatory domains follow at residues 3–117 (RYLI…AAAR) and 121–228 (LVAV…ERLH). 4-aspartylphosphate occurs at positions 52 and 169.

Is diphosphorylated by GchK.

Member of the two-component regulatory system GcHK/Anae109_2439. Is involved in a signal transduction system responding to oxygen availability. The chain is Response regulator receiver protein Anae109_2439 from Anaeromyxobacter sp. (strain Fw109-5).